A 478-amino-acid polypeptide reads, in one-letter code: Receptor-interacting serine/threonine-protein kinase 3 (478 aa).

Residue Ser-2 is modified to Phosphoserine. Residues 22–290 enclose the Protein kinase domain; the sequence is LENLGFVGKG…CESKTNNVYI (269 aa). Residues 28-36 and Lys-51 contribute to the ATP site; that span reads VGKGGFGAV. Asp-143 functions as the Proton acceptor in the catalytic mechanism. Residue Ser-165 is modified to Phosphoserine. Thr-185 carries the phosphothreonine modification. Position 201 is a phosphoserine; by autocatalysis (Ser-201). Thr-228 carries the post-translational modification Phosphothreonine. Residue Ser-229 is modified to Phosphoserine; by autocatalysis. Position 254 is a phosphothreonine (Thr-254). Residues Ser-301 and Ser-323 each carry the phosphoserine modification. The interval 311-330 is disordered; the sequence is RSSDTKLSARESSQKGTEVD. Over residues 313 to 330 the composition is skewed to basic and acidic residues; the sequence is SDTKLSARESSQKGTEVD. Residue Thr-335 is modified to Phosphothreonine. Phosphoserine occurs at positions 350, 369, and 380. The disordered stretch occupies residues 362–429; that stretch reads ERRGKEASFG…RNSNPWYTWN (68 aa). Polar residues predominate over residues 376–385; sequence AGTSSDTLAG. Position 392 is a phosphothreonine (Thr-392). Polar residues predominate over residues 413 to 429; sequence QRNQGDGRNSNPWYTWN. Residues 437–461 carry the RIP homotypic interaction motif (RHIM) motif; that stretch reads LQSIVLNNCSEVQIGQHNCMSVQPR. Omega-N-methylarginine is present on Arg-474.

Belongs to the protein kinase superfamily. TKL Ser/Thr protein kinase family. Interacts (via RIP homotypic interaction motif) with RIPK1 (via RIP homotypic interaction motif); this interaction induces RIPK1 phosphorylation and formation of a RIPK1-RIPK3 necrosis-inducing complex. Interacts with MLKL; the interaction is direct and triggers necroptosis. Interacts with ZBP1 (via RIP homotypic interaction motif); interaction with ZBP1 activates RIPK3, triggering necroptosis. Upon TNF-induced necrosis, the RIPK1-RIPK3 dimer further interacts with PGAM5 and MLKL; the formation of this complex leads to PGAM5 phosphorylation and increase in PGAM5 phosphatase activity. Binds TRAF2 and is recruited to the TNFR-1 signaling complex. Interacts with PYGL, GLUL and GLUD1; these interactions result in activation of these metabolic enzymes. Interacts with BIRC2/c-IAP1, BIRC3/c-IAP2 and XIAP/BIRC4. Interacts with ARHGEF2. Interacts with PELI1 (via atypical FHA domain); the phosphorylated form at Thr-185 binds preferentially to PELI1. Interacts with BUB1B, TRAF2 and STUB1. Interacts with CASP6. Component of the AIM2 PANoptosome complex, a multiprotein complex that drives inflammatory cell death (PANoptosis). In terms of processing, RIPK1 and RIPK3 undergo reciprocal auto- and trans-phosphorylation. Autophosphorylated following interaction with ZBP1. Phosphorylation of Ser-201 plays a role in the necroptotic function of RIPK3. Autophosphorylates at Thr-228 and Ser-229 following activation by ZBP1: phosphorylation at these sites is a hallmark of necroptosis and is required for binding MLKL. Phosphorylation at Thr-185 is important for its kinase activity, interaction with PELI1 and for its ability to mediate TNF-induced necroptosis. Polyubiquitinated with 'Lys-48' and 'Lys-63'-linked chains by BIRC2/c-IAP1 and BIRC3/c-IAP2, leading to activation of NF-kappa-B. Ubiquitinated by STUB1 leading to its subsequent proteasome-dependent degradation.

The protein localises to the cytoplasm. The protein resides in the cytosol. Its subcellular location is the nucleus. The catalysed reaction is L-seryl-[protein] + ATP = O-phospho-L-seryl-[protein] + ADP + H(+). The enzyme catalyses L-threonyl-[protein] + ATP = O-phospho-L-threonyl-[protein] + ADP + H(+). Activity is stimulated by ZBP1, which senses double-stranded Z-RNA structures. RIPK3-dependent necroptosis is inhibited by RIPK1: RIPK1 prevents the ZBP1-induced activation of RIPK3 via FADD-mediated recruitment of CASP8, which cleaves RIPK1 and limits TNF-induced necroptosis. Serine/threonine-protein kinase that activates necroptosis and apoptosis, two parallel forms of cell death. Necroptosis, a programmed cell death process in response to death-inducing TNF-alpha family members, is triggered by RIPK3 following activation by ZBP1. Activated RIPK3 forms a necrosis-inducing complex and mediates phosphorylation of MLKL, promoting MLKL localization to the plasma membrane and execution of programmed necrosis characterized by calcium influx and plasma membrane damage. In addition to TNF-induced necroptosis, necroptosis can also take place in the nucleus in response to orthomyxoviruses infection: following ZBP1 activation, which senses double-stranded Z-RNA structures, nuclear RIPK3 catalyzes phosphorylation and activation of MLKL, promoting disruption of the nuclear envelope and leakage of cellular DNA into the cytosol. Also regulates apoptosis: apoptosis depends on RIPK1, FADD and CASP8, and is independent of MLKL and RIPK3 kinase activity. Phosphorylates RIPK1: RIPK1 and RIPK3 undergo reciprocal auto- and trans-phosphorylation. In some cell types, also able to restrict viral replication by promoting cell death-independent responses. In response to flavivirus infection in neurons, promotes a cell death-independent pathway that restricts viral replication: together with ZBP1, promotes a death-independent transcriptional program that modifies the cellular metabolism via up-regulation expression of the enzyme ACOD1/IRG1 and production of the metabolite itaconate. Itaconate inhibits the activity of succinate dehydrogenase, generating a metabolic state in neurons that suppresses replication of viral genomes. RIPK3 binds to and enhances the activity of three metabolic enzymes: GLUL, GLUD1, and PYGL. These metabolic enzymes may eventually stimulate the tricarboxylic acid cycle and oxidative phosphorylation, which could result in enhanced ROS production. This chain is Receptor-interacting serine/threonine-protein kinase 3, found in Rattus norvegicus (Rat).